Here is a 308-residue protein sequence, read N- to C-terminus: Maspardin (308 aa).

The AB hydrolase-1 domain occupies 87 to 159; the sequence is FCDGFRKLLD…NSFWLMPAFM (73 aa). The residue at position 304 (Ser304) is a Phosphoserine.

The protein belongs to the AB hydrolase superfamily. As to quaternary structure, interacts with CD4. Interacts with ALDH16A1. As to expression, expressed in cell lines FT.1 and in a L cell fibroblast derivative (at protein level).

It is found in the cytoplasm. Functionally, may play a role as a negative regulatory factor in CD4-dependent T-cell activation. This Mus musculus (Mouse) protein is Maspardin (Spg21).